The following is a 76-amino-acid chain: Conotoxin Bu28 (76 aa).

The first 24 residues, 1 to 24 (MTSVQSATCCCLLWLVLCVQLVTP), serve as a signal peptide directing secretion. The propeptide occupies 25-39 (DSPATAQLSRHLTAR). 2 cysteine pairs are disulfide-bonded: Cys-50-Cys-63 and Cys-54-Cys-65. Arginine amide is present on Arg-69. A propeptide spanning residues 71-76 (VVSSSI) is cleaved from the precursor.

The protein belongs to the conotoxin J superfamily. As to expression, expressed by the venom duct.

The protein localises to the secreted. Functionally, highly inhibits both nicotinic acetylcholine receptors (neuronal (alpha-3/beta-4) and muscular (alpha-1/beta-1/epsilon/delta) subtypes) and the voltage-gated potassium channel Kv1.6/KCNA6 subtype. This is Conotoxin Bu28 from Conus bullatus (Bubble cone).